A 98-amino-acid chain; its full sequence is Hainantoxin-XVII-2 (98 aa).

Residues 1–40 (MTTVGVSLFRRSPEKITMKIATFLGLSFLLIASYVLICEA) form the signal peptide. Residues 41–64 (QHPGFQELLILEENMRDPENSKER) constitute a propeptide that is removed on maturation. 2 disulfides stabilise this stretch: C66–C81 and C73–C85.

Belongs to the hainantoxin family. 17 subfamily. In terms of tissue distribution, expressed by the venom gland.

The protein resides in the secreted. Functionally, putative ion channel inhibitor. The sequence is that of Hainantoxin-XVII-2 from Cyriopagopus hainanus (Chinese bird spider).